The primary structure comprises 164 residues: Phosphopantetheine adenylyltransferase (164 aa).

Ser9 contributes to the substrate binding site. ATP is bound by residues 9–10 and His17; that span reads SF. Substrate is bound by residues Lys41, Val78, and Arg92. Residues 93 to 95, Glu103, and 128 to 134 each bind ATP; these read GLR and VRTITAT.

It belongs to the bacterial CoaD family. In terms of assembly, homohexamer. Mg(2+) serves as cofactor.

The protein localises to the cytoplasm. It catalyses the reaction (R)-4'-phosphopantetheine + ATP + H(+) = 3'-dephospho-CoA + diphosphate. It functions in the pathway cofactor biosynthesis; coenzyme A biosynthesis; CoA from (R)-pantothenate: step 4/5. In terms of biological role, reversibly transfers an adenylyl group from ATP to 4'-phosphopantetheine, yielding dephospho-CoA (dPCoA) and pyrophosphate. This chain is Phosphopantetheine adenylyltransferase, found in Brucella suis (strain ATCC 23445 / NCTC 10510).